Here is a 339-residue protein sequence, read N- to C-terminus: Uroporphyrinogen decarboxylase (339 aa).

Residues 21–25 (RQAGR), phenylalanine 40, aspartate 71, tyrosine 147, serine 202, and histidine 315 each bind substrate.

The protein belongs to the uroporphyrinogen decarboxylase family. As to quaternary structure, homodimer.

It localises to the cytoplasm. The enzyme catalyses uroporphyrinogen III + 4 H(+) = coproporphyrinogen III + 4 CO2. The protein operates within porphyrin-containing compound metabolism; protoporphyrin-IX biosynthesis; coproporphyrinogen-III from 5-aminolevulinate: step 4/4. Its function is as follows. Catalyzes the decarboxylation of four acetate groups of uroporphyrinogen-III to yield coproporphyrinogen-III. This is Uroporphyrinogen decarboxylase from Helicobacter pylori (strain J99 / ATCC 700824) (Campylobacter pylori J99).